The sequence spans 157 residues: 2-C-methyl-D-erythritol 2,4-cyclodiphosphate synthase (157 aa).

A divalent metal cation is bound by residues Asp8 and His10. 4-CDP-2-C-methyl-D-erythritol 2-phosphate contacts are provided by residues 8–10 and 34–35; these read DVH and HS. His42 is a binding site for a divalent metal cation. 4-CDP-2-C-methyl-D-erythritol 2-phosphate is bound by residues 56–58, 132–135, and Arg142; these read DIG and TTNE.

This sequence belongs to the IspF family. Homotrimer. Requires a divalent metal cation as cofactor.

The enzyme catalyses 4-CDP-2-C-methyl-D-erythritol 2-phosphate = 2-C-methyl-D-erythritol 2,4-cyclic diphosphate + CMP. It functions in the pathway isoprenoid biosynthesis; isopentenyl diphosphate biosynthesis via DXP pathway; isopentenyl diphosphate from 1-deoxy-D-xylulose 5-phosphate: step 4/6. Involved in the biosynthesis of isopentenyl diphosphate (IPP) and dimethylallyl diphosphate (DMAPP), two major building blocks of isoprenoid compounds. Catalyzes the conversion of 4-diphosphocytidyl-2-C-methyl-D-erythritol 2-phosphate (CDP-ME2P) to 2-C-methyl-D-erythritol 2,4-cyclodiphosphate (ME-CPP) with a corresponding release of cytidine 5-monophosphate (CMP). This chain is 2-C-methyl-D-erythritol 2,4-cyclodiphosphate synthase, found in Prosthecochloris aestuarii (strain DSM 271 / SK 413).